The chain runs to 287 residues: Small ribosomal subunit biogenesis GTPase RsgA (287 aa).

Residues 61–218 (SSELIRPTVA…LVDTPGFTTL (158 aa)) enclose the CP-type G domain. Residues 110–113 (NKED) and 161–169 (GPSGAGKST) each bind GTP. Residues cysteine 242, cysteine 247, histidine 249, and cysteine 255 each coordinate Zn(2+).

This sequence belongs to the TRAFAC class YlqF/YawG GTPase family. RsgA subfamily. Monomer. Associates with 30S ribosomal subunit, binds 16S rRNA. The cofactor is Zn(2+).

It localises to the cytoplasm. Functionally, one of several proteins that assist in the late maturation steps of the functional core of the 30S ribosomal subunit. Helps release RbfA from mature subunits. May play a role in the assembly of ribosomal proteins into the subunit. Circularly permuted GTPase that catalyzes slow GTP hydrolysis, GTPase activity is stimulated by the 30S ribosomal subunit. The chain is Small ribosomal subunit biogenesis GTPase RsgA from Clostridium perfringens (strain 13 / Type A).